The chain runs to 605 residues: MPPTGTEVGMIRNFCIIAHIDHGKSTLADRLLEVTHTLERNQMSTAQVLDDMDLERERGITIKSHAVQMRYTAKDGQDYILNLIDTPGHVDFSYEVSRSLAACEGALLVVDATQGVEAQTIANLYLAIEAGLEIIPVINKIDLPSSDVEGVARQIIDLIGVNRDEILRVSAKNGIGVDDLMEAIVARVPAPADNRQMPLRALIFDSVFDAYRGAIAYIRIVDGVLKKGDRVRFFANDKIFMADEIGTMSLKRNPVDILEAGNVGYLICSIKDVKDAKVGDTVTLVENPAAERLAGYKDVKPMVFSGLYPVESNEFEDLRESLEKLSLNDASLVYTPETSAALGFGFRCGFLGLLHMEIIQERLEREYGVNIITTVPNVEYRVIMTSGETVEVDNPSKMPETTKINWIEEPYVSMQIITMSEYIGNIMKLGMERRGEYKNTDYLDTSRVNIHFEFPLGEVVFDFHDKLKSISKGYASMDYEYIGYRRSDLVKLDVLLNGEPVDALSSIVHRSKSYEWGRKLCQKLKGIIPRQMYEVAIQAAIGSRVIARESISAMRKNVLAKCYGGDISRKRKLLEKQKEGKKRMKQVGRVEVPQEAFLAVLNIDE.

The tr-type G domain maps to 9–192 (GMIRNFCIIA…AIVARVPAPA (184 aa)). GTP-binding positions include 21–26 (DHGKST) and 139–142 (NKID).

The protein belongs to the TRAFAC class translation factor GTPase superfamily. Classic translation factor GTPase family. LepA subfamily.

It localises to the cell inner membrane. The catalysed reaction is GTP + H2O = GDP + phosphate + H(+). Required for accurate and efficient protein synthesis under certain stress conditions. May act as a fidelity factor of the translation reaction, by catalyzing a one-codon backward translocation of tRNAs on improperly translocated ribosomes. Back-translocation proceeds from a post-translocation (POST) complex to a pre-translocation (PRE) complex, thus giving elongation factor G a second chance to translocate the tRNAs correctly. Binds to ribosomes in a GTP-dependent manner. This chain is Elongation factor 4, found in Chlorobaculum tepidum (strain ATCC 49652 / DSM 12025 / NBRC 103806 / TLS) (Chlorobium tepidum).